The chain runs to 111 residues: Probable 4-amino-4-deoxy-L-arabinose-phosphoundecaprenol flippase subunit ArnE (111 aa).

3 helical membrane-spanning segments follow: residues 37–57 (LIWL…WLKL), 65–85 (QAYP…HFFF), and 91–111 (LQHW…GQGI).

The protein belongs to the ArnE family. As to quaternary structure, heterodimer of ArnE and ArnF.

It localises to the cell inner membrane. It functions in the pathway bacterial outer membrane biogenesis; lipopolysaccharide biosynthesis. Translocates 4-amino-4-deoxy-L-arabinose-phosphoundecaprenol (alpha-L-Ara4N-phosphoundecaprenol) from the cytoplasmic to the periplasmic side of the inner membrane. The protein is Probable 4-amino-4-deoxy-L-arabinose-phosphoundecaprenol flippase subunit ArnE of Hamiltonella defensa subsp. Acyrthosiphon pisum (strain 5AT).